The sequence spans 790 residues: LPS-assembly protein LptD (790 aa).

The first 20 residues, 1–20 (MRMLRWLILSAFSVAGAVQA), serve as a signal peptide directing secretion.

The protein belongs to the LptD family. In terms of assembly, component of the lipopolysaccharide transport and assembly complex. Interacts with LptE and LptA.

It localises to the cell outer membrane. Together with LptE, is involved in the assembly of lipopolysaccharide (LPS) at the surface of the outer membrane. In Bordetella pertussis (strain Tohama I / ATCC BAA-589 / NCTC 13251), this protein is LPS-assembly protein LptD.